The following is a 215-amino-acid chain: Golgi-associated RAB2 interactor protein 5A (215 aa).

Disordered stretches follow at residues 1–20 (MKRG…AGPG) and 174–215 (QDYS…LWGL). The span at 178–191 (ALEDDEDDDEDEDR) shows a compositional bias: acidic residues.

Belongs to the GARIN family. As to quaternary structure, interacts (via N-terminus) with RAB2B (in GTP-bound form).

The protein localises to the golgi apparatus. Functionally, RAB2B effector protein which promotes cytosolic DNA-induced innate immune responses. Regulates IFN responses against DNA viruses by regulating the CGAS-STING signaling axis. The protein is Golgi-associated RAB2 interactor protein 5A (GARIN5A) of Bos taurus (Bovine).